The following is a 366-amino-acid chain: Carbamoyl phosphate synthase small chain (366 aa).

The segment at 1 to 171 (MKKRKLILED…KPYVVPGRGL (171 aa)) is CPSase. L-glutamine-binding residues include serine 46, glycine 220, and glycine 222. Residues 172-359 (RVVMVDFGAK…LNLIKASKVK (188 aa)) enclose the Glutamine amidotransferase type-1 domain. Cysteine 247 acts as the Nucleophile in catalysis. 4 residues coordinate L-glutamine: leucine 248, glutamine 251, asparagine 289, and tyrosine 292. Catalysis depends on residues histidine 332 and glutamate 334.

Belongs to the CarA family. As to quaternary structure, composed of two chains; the small (or glutamine) chain promotes the hydrolysis of glutamine to ammonia, which is used by the large (or ammonia) chain to synthesize carbamoyl phosphate. Tetramer of heterodimers (alpha,beta)4.

It catalyses the reaction hydrogencarbonate + L-glutamine + 2 ATP + H2O = carbamoyl phosphate + L-glutamate + 2 ADP + phosphate + 2 H(+). The enzyme catalyses L-glutamine + H2O = L-glutamate + NH4(+). It participates in amino-acid biosynthesis; L-arginine biosynthesis; carbamoyl phosphate from bicarbonate: step 1/1. Its pathway is pyrimidine metabolism; UMP biosynthesis via de novo pathway; (S)-dihydroorotate from bicarbonate: step 1/3. Small subunit of the glutamine-dependent carbamoyl phosphate synthetase (CPSase). CPSase catalyzes the formation of carbamoyl phosphate from the ammonia moiety of glutamine, carbonate, and phosphate donated by ATP, constituting the first step of 2 biosynthetic pathways, one leading to arginine and/or urea and the other to pyrimidine nucleotides. The small subunit (glutamine amidotransferase) binds and cleaves glutamine to supply the large subunit with the substrate ammonia. In Oceanobacillus iheyensis (strain DSM 14371 / CIP 107618 / JCM 11309 / KCTC 3954 / HTE831), this protein is Carbamoyl phosphate synthase small chain.